A 1009-amino-acid chain; its full sequence is Protein-tyrosine kinase 2-beta (1009 aa).

The region spanning 39–359 (RILKVCFYSN…GYCRLQGEHK (321 aa)) is the FERM domain. 3 positions are modified to phosphoserine: serine 361, serine 375, and serine 399. Tyrosine 402 bears the Phosphotyrosine; by autocatalysis mark. In terms of domain architecture, Protein kinase spans 425–683 (VVLNRILGEG…ELVCSLSDIY (259 aa)). Residues 431–439 (LGEGFFGEV), lysine 457, and 503–509 (ELYPYGE) each bind ATP. The active-site Proton acceptor is aspartate 549. Tyrosine 579 bears the Phosphotyrosine mark. Phosphotyrosine; by SRC, FYN and LCK is present on tyrosine 580. Positions 696–728 (NARYRPPKILEPTTFQEPPPKPSRPKYRPPPQT) are disordered. The span at 712–727 (EPPPKPSRPKYRPPPQ) shows a compositional bias: pro residues. The residue at position 722 (tyrosine 722) is a Phosphotyrosine. Serine 762 bears the Phosphoserine mark. The residue at position 765 (threonine 765) is a Phosphothreonine. The segment at 801–1009 (KIKMKQVLER…VANLAHPPAE (209 aa)) is interaction with TGFB1I1. Tyrosine 834 bears the Phosphotyrosine mark. Serine 839 carries the phosphoserine modification. Threonine 842 carries the post-translational modification Phosphothreonine. Phosphotyrosine is present on tyrosine 849. Serine 866 bears the Phosphoserine mark. A focal adhesion targeting (FAT) region spans residues 868 to 1009 (QPTANLDRTD…VANLAHPPAE (142 aa)). Phosphotyrosine is present on tyrosine 881.

This sequence belongs to the protein kinase superfamily. Tyr protein kinase family. FAK subfamily. As to quaternary structure, homodimer, or homooligomer. Interacts with KCNA2. Interacts with NPHP1, ASAP1, ASAP2, ARHGAP26, SKAP2 and TGFB1I1. The Tyr-402 phosphorylated form interacts with SRC (via SH2 domain) and SRC family members. Forms a signaling complex with EPHA1, LCK and phosphatidylinositol 3-kinase; upon activation by EFNA1. Interacts with GRB2 (via SH2 domain). Interacts with P53/TP53 and MDM2. Interacts with MYLK. Interacts with BCAR1. Interacts with RB1CC1. Interacts with RHOU. Interacts with VAV1. Interacts with PDPK1. Interacts with DLG4. Interacts with LPXN and PTPN12. Interacts with SIRPA and SH2D3C. Interacts (hypophosphorylated) with PXN. Interacts with ARHGAP10. Phosphorylated on tyrosine residues in response to various stimuli that elevate the intracellular calcium concentration; this activation is indirect and may be mediated by production of reactive oxygen species (ROS). Tyr-402 is the major autophosphorylation site, but other kinases can also phosphorylate Tyr-402. Autophosphorylation occurs in trans, i.e. one subunit of the dimeric receptor phosphorylates tyrosine residues on the other subunit. Phosphorylation at Tyr-402 promotes interaction with SRC and SRC family members, leading to phosphorylation at Tyr-579; Tyr-580 and Tyr-881. Phosphorylation at Tyr-881 is important for interaction with GRB2. Phosphorylated on tyrosine residues upon activation of FGR and PKC. Recruitment by NPHP1 to cell matrix adhesions initiates Tyr-402 phosphorylation. In monocytes, adherence to substrata is required for tyrosine phosphorylation and kinase activation. Angiotensin II, thapsigargin and L-alpha-lysophosphatidic acid (LPA) also induce autophosphorylation and increase kinase activity. Phosphorylation by MYLK promotes ITGB2 activation and is thus essential to trigger neutrophil transmigration during lung injury. Dephosphorylated by PTPN12.

Its subcellular location is the cytoplasm. It is found in the perinuclear region. It localises to the cell membrane. The protein localises to the cell junction. The protein resides in the focal adhesion. Its subcellular location is the cell projection. It is found in the lamellipodium. It localises to the cell cortex. The protein localises to the nucleus. The catalysed reaction is L-tyrosyl-[protein] + ATP = O-phospho-L-tyrosyl-[protein] + ADP + H(+). Activated in response to stimuli that lead to increased intracellular Ca(2+) levels; this activation is indirect and may be mediated by calcium-mediated production of reactive oxygen species (ROS). Activated by autophosphorylation at Tyr-402; this creates a binding site for SRC family kinases and leads to phosphorylation at additional tyrosine residues. Phosphorylation at Tyr-402, Tyr-579 and Tyr-580 is required for optimal kinase activity. Its function is as follows. Non-receptor protein-tyrosine kinase that regulates reorganization of the actin cytoskeleton, cell polarization, cell migration, adhesion, spreading and bone remodeling. Plays a role in the regulation of the humoral immune response, and is required for normal levels of marginal B-cells in the spleen and normal migration of splenic B-cells. Required for normal macrophage polarization and migration towards sites of inflammation. Regulates cytoskeleton rearrangement and cell spreading in T-cells, and contributes to the regulation of T-cell responses. Promotes osteoclastic bone resorption; this requires both PTK2B/PYK2 and SRC. May inhibit differentiation and activity of osteoprogenitor cells. Functions in signaling downstream of integrin and collagen receptors, immune receptors, G-protein coupled receptors (GPCR), cytokine, chemokine and growth factor receptors, and mediates responses to cellular stress. Forms multisubunit signaling complexes with SRC and SRC family members upon activation; this leads to the phosphorylation of additional tyrosine residues, creating binding sites for scaffold proteins, effectors and substrates. Regulates numerous signaling pathways. Promotes activation of phosphatidylinositol 3-kinase and of the AKT1 signaling cascade. Promotes activation of NOS3. Regulates production of the cellular messenger cGMP. Promotes activation of the MAP kinase signaling cascade, including activation of MAPK1/ERK2, MAPK3/ERK1 and MAPK8/JNK1. Promotes activation of Rho family GTPases, such as RHOA and RAC1. Recruits the ubiquitin ligase MDM2 to P53/TP53 in the nucleus, and thereby regulates P53/TP53 activity, P53/TP53 ubiquitination and proteasomal degradation. Acts as a scaffold, binding to both PDPK1 and SRC, thereby allowing SRC to phosphorylate PDPK1 at 'Tyr-9, 'Tyr-373', and 'Tyr-376'. Promotes phosphorylation of NMDA receptors by SRC family members, and thereby contributes to the regulation of NMDA receptor ion channel activity and intracellular Ca(2+) levels. May also regulate potassium ion transport by phosphorylation of potassium channel subunits. Phosphorylates SRC; this increases SRC kinase activity. Phosphorylates ASAP1, NPHP1, KCNA2 and SHC1. Promotes phosphorylation of ASAP2, RHOU and PXN; this requires both SRC and PTK2/PYK2. The polypeptide is Protein-tyrosine kinase 2-beta (Ptk2b) (Mus musculus (Mouse)).